Reading from the N-terminus, the 582-residue chain is MSINTDETTWQTFKRLWQFIRLYKSGLIVAVIALVINAISDTYMISLLKPLLDEGFGNADSDFLRTLPLIIFVMMFIRGTSGFVSTYCLSWVSGNVVMLVRRMVFNHFMHMPVSYFDKEKTGNLLSRITYDSEQVSAATSQALVSIVREGASIIGLLVLMFYNSWQLSLVLFAVAPVVAWGIGVVSKRFRKISKNMQTMMGNVTASAEQMLKGHKVVLSYGGQDIERQRFDKVSNQMRQQSMKLVTAQAAANPIIQMIASFAIVAVLYLASIDSIKEQLTPGTFTVVFSAMFGLMRPLKALTNVTSQFQRGMAASQTLFALIDLEPEKNEGKYTVERAKGDVSVKDVSFTYVGSEKPALEHVSFDIPRGKTVALVGRSGSGKSTIANLFNRFYDVDSGSITLDGRDIRDYELKNLREQFALVSQNVHLFNDTIANNIAYATEDKYERSDIEHAAKLAHAMEFINKMENGLDTMIGENGASLSGGQRQRVAIARALLRDAPVLILDEATSALDTESERAIQAALDELQKDKTVLVIAHRLSTIEKADEILVVDDGAIIERGNHADLIAKNGAYAQLHRIQFGE.

Transmembrane regions (helical) follow at residues 27–47, 69–89, 142–162, 165–185, and 249–269; these read LIVAVIALVINAISDTYMISL, LIIFVMMFIRGTSGFVSTYCL, ALVSIVREGASIIGLLVLMFY, WQLSLVLFAVAPVVAWGIGVV, and AAANPIIQMIASFAIVAVLYL. The ABC transmembrane type-1 domain occupies 28–310; it reads IVAVIALVIN…LTNVTSQFQR (283 aa). Positions 342 to 578 constitute an ABC transporter domain; it reads VSVKDVSFTY…NGAYAQLHRI (237 aa). 376–383 contributes to the ATP binding site; that stretch reads GRSGSGKS.

The protein belongs to the ABC transporter superfamily. Lipid exporter (TC 3.A.1.106) family. In terms of assembly, homodimer.

The protein localises to the cell inner membrane. The catalysed reaction is ATP + H2O + lipid A-core oligosaccharideSide 1 = ADP + phosphate + lipid A-core oligosaccharideSide 2.. Its function is as follows. Involved in lipopolysaccharide (LPS) biosynthesis. Translocates lipid A-core from the inner to the outer leaflet of the inner membrane. Transmembrane domains (TMD) form a pore in the inner membrane and the ATP-binding domain (NBD) is responsible for energy generation. The chain is ATP-dependent lipid A-core flippase from Vibrio parahaemolyticus serotype O3:K6 (strain RIMD 2210633).